Here is a 361-residue protein sequence, read N- to C-terminus: Ribosomal RNA large subunit methyltransferase M (361 aa).

S-adenosyl-L-methionine contacts are provided by residues serine 187, 220–223, aspartate 239, aspartate 259, and aspartate 276; that span reads CPGG. Lysine 305 functions as the Proton acceptor in the catalytic mechanism.

Belongs to the class I-like SAM-binding methyltransferase superfamily. RNA methyltransferase RlmE family. RlmM subfamily. In terms of assembly, monomer.

It is found in the cytoplasm. It carries out the reaction cytidine(2498) in 23S rRNA + S-adenosyl-L-methionine = 2'-O-methylcytidine(2498) in 23S rRNA + S-adenosyl-L-homocysteine + H(+). Its function is as follows. Catalyzes the 2'-O-methylation at nucleotide C2498 in 23S rRNA. The chain is Ribosomal RNA large subunit methyltransferase M from Shewanella oneidensis (strain ATCC 700550 / JCM 31522 / CIP 106686 / LMG 19005 / NCIMB 14063 / MR-1).